A 276-amino-acid chain; its full sequence is Merozoite surface protein 2 (276 aa).

An N-terminal signal peptide occupies residues 1 to 20 (MKVIKTLSIINFFIFVTFNI). 2 N-linked (GlcNAc...) asparagine glycosylation sites follow: asparagine 22 and asparagine 36. A polymorphic region region spans residues 44–202 (AESNPSTGAG…EQTESPELQS (159 aa)). Residues 44-242 (AESNPSTGAG…CTDGNKENCG (199 aa)) form a disordered region. Over residues 51 to 90 (GAGGSGSAGGSGSAGGSGSAGGSGSAGGSGSAGSGDGNGA) the composition is skewed to gly residues. 5 repeat units span residues 53–58 (GGSGSA), 59–64 (GGSGSA), 65–70 (GGSGSA), 71–76 (GGSGSA), and 77–82 (GGSGSA). A 5 X 6 AA tandem repeats of G-G-S-G-S-A region spans residues 53–82 (GGSGSAGGSGSAGGSGSAGGSGSAGGSGSA). Residues 91-127 (NPGADAERSPSTPATTTTTTTTNDAEASTSTSSENPN) are compositionally biased toward low complexity. Polar residues-rich tracts occupy residues 143–169 (KPNQ…NVPP), 176–187 (KSPTAQPEQAEN), and 194–204 (QTESPELQSAP). A glycan (N-linked (GlcNAc...) asparagine) is linked at asparagine 153. N-linked (GlcNAc...) asparagine glycosylation occurs at asparagine 225. Basic and acidic residues predominate over residues 229–238 (SQKECTDGNK). Cysteines 233 and 241 form a disulfide. N-linked (GlcNAc...) asparagine glycosylation occurs at asparagine 250. Asparagine 250 carries the GPI-anchor amidated asparagine lipid modification. Residues 251–276 (SSNIASINKFVVLISATLVLSFAIFI) constitute a propeptide, removed in mature form.

The protein localises to the cell membrane. Functionally, may play a role in the merozoite attachment to the erythrocyte. The chain is Merozoite surface protein 2 from Plasmodium falciparum (isolate 7G8).